The sequence spans 219 residues: LHFPL tetraspan subfamily member 5 protein (219 aa).

The Cytoplasmic portion of the chain corresponds to 1 to 24 (MVKLLPAQEAAKIYHTNYVRNSRA). Residues 25-45 (VGVMWGTLTICFSVLVMALFI) form a helical membrane-spanning segment. The Extracellular segment spans residues 46–98 (QPYWIGDSVSTPQAGYFGLFSYCVGNVLSSELICKGGPLDFSSIPSRAFKTAM). The helical transmembrane segment at 99-119 (FFVALAMFLIIGSIICFSLFF) threads the bilayer. The Cytoplasmic segment spans residues 120 to 128 (VCNTATVYK). A helical transmembrane segment spans residues 129-149 (ICAWMQLAAATGLMIGCLVYP). The Extracellular portion of the chain corresponds to 150 to 178 (DGWDSSEVRRMCGEQTGKYTLGHCTIRWA). Residues 179–199 (FMLAILSIGDALILSFLAFVL) form a helical membrane-spanning segment. The Cytoplasmic segment spans residues 200–219 (GYRQDKLLPDDYKADGNEEV).

This sequence belongs to the LHFP family. Forms the MET channel composed of TMC (TMC1 or TMC2), TMIE, TOMT, CIB (CIB2 or CIB3), LHPL5 and PCDH15. Interaction with PCDH15 is required for efficient localization to hair bundles.

The protein resides in the cell membrane. Functionally, auxiliary subunit of the mechanotransducer (MET) non-specific cation channel complex located at the tips of the shorter stereocilia of cochlear hair cells and that mediates sensory transduction in the auditory system. The MET complex is composed of two dimeric pore-forming ion-conducting transmembrane TMC (TMC1 or TMC2) subunits, and aided by several auxiliary proteins including LHFPL5, TMIE, CIB2/3 and TOMT, and the tip-link PCDH15. Functionally couples PCDH15 to the transduction channel. This is LHFPL tetraspan subfamily member 5 protein from Rattus norvegicus (Rat).